Consider the following 367-residue polypeptide: uncharacterized protein (367 aa).

4 helical membrane passes run 18 to 38 (ILAL…GILG), 239 to 259 (VSYF…IGIG), 296 to 316 (ILGV…GYLI), and 329 to 349 (AIFY…ISAL).

It belongs to the ABC-4 integral membrane protein family.

It localises to the cell membrane. This is an uncharacterized protein from Methanocaldococcus jannaschii (strain ATCC 43067 / DSM 2661 / JAL-1 / JCM 10045 / NBRC 100440) (Methanococcus jannaschii).